The chain runs to 455 residues: Probable glucarate dehydratase (455 aa).

Substrate contacts are provided by His-42, Thr-113, Tyr-160, and Lys-215. Residue Lys-217 is the Proton acceptor of the active site. Mg(2+) is bound by residues Asp-245, Glu-276, and Asn-299. 245–247 provides a ligand contact to substrate; the sequence is DPN. Substrate contacts are provided by residues Asn-299, 349-351, His-378, and Arg-431; that span reads HSN. His-349 acts as the Proton acceptor in catalysis.

It belongs to the mandelate racemase/muconate lactonizing enzyme family. GlucD subfamily. The cofactor is Mg(2+).

It catalyses the reaction D-glucarate = 5-dehydro-4-deoxy-D-glucarate + H2O. It functions in the pathway carbohydrate acid metabolism; D-glucarate degradation; 2,5-dioxopentanoate from D-glucarate: step 1/2. Catalyzes the dehydration of glucarate to 5-keto-4-deoxy-D-glucarate (5-kdGluc). The sequence is that of Probable glucarate dehydratase (gudD) from Bacillus subtilis (strain 168).